The following is a 305-amino-acid chain: Methionyl-tRNA formyltransferase (305 aa).

109 to 112 serves as a coordination point for (6S)-5,6,7,8-tetrahydrofolate; that stretch reads SLLP.

This sequence belongs to the Fmt family.

It carries out the reaction L-methionyl-tRNA(fMet) + (6R)-10-formyltetrahydrofolate = N-formyl-L-methionyl-tRNA(fMet) + (6S)-5,6,7,8-tetrahydrofolate + H(+). Functionally, attaches a formyl group to the free amino group of methionyl-tRNA(fMet). The formyl group appears to play a dual role in the initiator identity of N-formylmethionyl-tRNA by promoting its recognition by IF2 and preventing the misappropriation of this tRNA by the elongation apparatus. This chain is Methionyl-tRNA formyltransferase, found in Paramagnetospirillum magneticum (strain ATCC 700264 / AMB-1) (Magnetospirillum magneticum).